The primary structure comprises 160 residues: Putative antiporter subunit mnhE2 (160 aa).

A run of 3 helical transmembrane segments spans residues 22–42, 55–75, and 100–120; these read HFKF…IYIL, IWVA…SSIS, and SDWA…STVI.

The protein belongs to the CPA3 antiporters (TC 2.A.63) subunit E family. May form a heterooligomeric complex that consists of seven subunits: mnhA2, mnhB2, mnhC2, mnhD2, mnhE2, mnhF2 and mnhG2.

It localises to the cell membrane. This Staphylococcus aureus (strain Mu3 / ATCC 700698) protein is Putative antiporter subunit mnhE2 (mnhE2).